We begin with the raw amino-acid sequence, 214 residues long: Redox-sensing transcriptional repressor Rex (214 aa).

Positions I16–F55 form a DNA-binding region, H-T-H motif. G90–G95 is a binding site for NAD(+).

Belongs to the transcriptional regulatory Rex family. Homodimer.

The protein localises to the cytoplasm. Its function is as follows. Modulates transcription in response to changes in cellular NADH/NAD(+) redox state. In Limosilactobacillus reuteri (strain DSM 20016) (Lactobacillus reuteri), this protein is Redox-sensing transcriptional repressor Rex.